A 426-amino-acid chain; its full sequence is D-tagatose-1,6-bisphosphate aldolase subunit KbaZ (426 aa).

Belongs to the GatZ/KbaZ family. KbaZ subfamily. Forms a complex with KbaY.

It functions in the pathway carbohydrate metabolism; D-tagatose 6-phosphate degradation; D-glyceraldehyde 3-phosphate and glycerone phosphate from D-tagatose 6-phosphate: step 2/2. Functionally, component of the tagatose-1,6-bisphosphate aldolase KbaYZ that is required for full activity and stability of the Y subunit. Could have a chaperone-like function for the proper and stable folding of KbaY. When expressed alone, KbaZ does not show any aldolase activity. This Escherichia coli (strain 55989 / EAEC) protein is D-tagatose-1,6-bisphosphate aldolase subunit KbaZ.